The chain runs to 732 residues: Elongation factor 2 (732 aa).

The 242-residue stretch at 19–260 (ERIRNMGIAA…MVVKHLPNPL (242 aa)) folds into the tr-type G domain. GTP contacts are provided by residues 28-35 (AHIDHGKT), 94-98 (DTPGH), and 148-151 (NKVD). His-597 carries the post-translational modification Diphthamide.

It belongs to the TRAFAC class translation factor GTPase superfamily. Classic translation factor GTPase family. EF-G/EF-2 subfamily.

Its subcellular location is the cytoplasm. Its function is as follows. Catalyzes the GTP-dependent ribosomal translocation step during translation elongation. During this step, the ribosome changes from the pre-translocational (PRE) to the post-translocational (POST) state as the newly formed A-site-bound peptidyl-tRNA and P-site-bound deacylated tRNA move to the P and E sites, respectively. Catalyzes the coordinated movement of the two tRNA molecules, the mRNA and conformational changes in the ribosome. This is Elongation factor 2 from Thermococcus kodakarensis (strain ATCC BAA-918 / JCM 12380 / KOD1) (Pyrococcus kodakaraensis (strain KOD1)).